We begin with the raw amino-acid sequence, 173 residues long: Inner membrane protein YbcI (173 aa).

The Cytoplasmic segment spans residues 1–12 (MPTVITHAAVPL). The helical transmembrane segment at 13–35 (CIGLGLGSKVIPPRLLFAGIILA) threads the bilayer. The Periplasmic portion of the chain corresponds to 36-54 (MLPDADVLSFKFGVAYGNV). A helical transmembrane segment spans residues 55 to 77 (FGHRGFTHSLVFAFVVPLLCVFI). The Cytoplasmic portion of the chain corresponds to 78–83 (GRRWFR). Residues 84 to 103 (AGLIRCWLFLTVSLLSHSLL) traverse the membrane as a helical segment. The Periplasmic segment spans residues 104 to 147 (DSVTTGGKGVGWLWPWSDERFFAPWQVIKVAPFALSRYTTPYGH). The helical transmembrane segment at 148–170 (QVIISELMWVWLPGMLLMGMLWW) threads the bilayer. The Cytoplasmic portion of the chain corresponds to 171 to 173 (RRR).

Its subcellular location is the cell inner membrane. The chain is Inner membrane protein YbcI (ybcI) from Escherichia coli (strain K12).